The sequence spans 88 residues: LYR motif-containing protein 2 (88 aa).

A mitochondrion-targeting transit peptide spans 1–19; that stretch reads MAVSRLPPAALSLKQFLQR.

This sequence belongs to the complex I LYR family.

It localises to the mitochondrion. Its function is as follows. Involved in efficient integration of the N-module into mitochondrial respiratory chain complex I. This Danio rerio (Zebrafish) protein is LYR motif-containing protein 2 (lyrm2).